Here is a 360-residue protein sequence, read N- to C-terminus: GTPase Obg (360 aa).

Residues 1 to 156 form the Obg domain; it reads MFVDSVEIII…KCVRLELKLI (156 aa). Residues 157 to 360 enclose the OBG-type G domain; it reads ADIGLVGFPN…LKFVLLEALP (204 aa). GTP contacts are provided by residues 163–170, 188–192, 210–213, 279–282, and 341–343; these read GFPNAGKS, FTTLV, DIPG, NKCD, and SAV. Mg(2+) contacts are provided by S170 and T190.

It belongs to the TRAFAC class OBG-HflX-like GTPase superfamily. OBG GTPase family. In terms of assembly, monomer. Mg(2+) is required as a cofactor.

It is found in the cytoplasm. Its function is as follows. An essential GTPase which binds GTP, GDP and possibly (p)ppGpp with moderate affinity, with high nucleotide exchange rates and a fairly low GTP hydrolysis rate. Plays a role in control of the cell cycle, stress response, ribosome biogenesis and in those bacteria that undergo differentiation, in morphogenesis control. In Helicobacter pylori (strain HPAG1), this protein is GTPase Obg.